The following is an 871-amino-acid chain: DNA mismatch repair protein MutS (871 aa).

Residue 620–627 (GPNMGGKS) participates in ATP binding. The disordered stretch occupies residues 806–837 (HHGGLNEPKQATMELTPPPEAIPSHTEKRNPL).

The protein belongs to the DNA mismatch repair MutS family.

This protein is involved in the repair of mismatches in DNA. It is possible that it carries out the mismatch recognition step. This protein has a weak ATPase activity. This chain is DNA mismatch repair protein MutS, found in Idiomarina loihiensis (strain ATCC BAA-735 / DSM 15497 / L2-TR).